The chain runs to 375 residues: Serpentine receptor class alpha-39 (375 aa).

Transmembrane regions (helical) follow at residues 17–37 (LFAI…LFII), 51–71 (LVFL…LTAW), 99–119 (IRGT…GILL), 138–158 (LGTI…FILL), 183–203 (VYVM…VHLV), 236–256 (TPLL…VSVF), and 275–295 (LFIM…ELWL).

Belongs to the nematode receptor-like protein sra family.

The protein resides in the membrane. This is Serpentine receptor class alpha-39 (sra-39) from Caenorhabditis elegans.